We begin with the raw amino-acid sequence, 445 residues long: NAD-specific glutamate dehydrogenase (445 aa).

Lysine 124 is a catalytic residue.

This sequence belongs to the Glu/Leu/Phe/Val dehydrogenases family. As to quaternary structure, homohexamer.

The protein localises to the cell surface. The enzyme catalyses L-glutamate + NAD(+) + H2O = 2-oxoglutarate + NH4(+) + NADH + H(+). Probably involved in degradation rather than biosynthesis of glutamate. The polypeptide is NAD-specific glutamate dehydrogenase (gdh) (Porphyromonas gingivalis (strain ATCC 33277 / DSM 20709 / CIP 103683 / JCM 12257 / NCTC 11834 / 2561)).